The following is a 281-amino-acid chain: N-acetylmuramic acid 6-phosphate etherase (281 aa).

Residues 63 to 226 form the SIS domain; that stretch reads IVPRMKQGGR…TTSVMIQLGR (164 aa). Catalysis depends on Glu-91, which acts as the Proton donor. Glu-122 is a catalytic residue.

It belongs to the GCKR-like family. MurNAc-6-P etherase subfamily. In terms of assembly, homodimer.

The catalysed reaction is N-acetyl-D-muramate 6-phosphate + H2O = N-acetyl-D-glucosamine 6-phosphate + (R)-lactate. It functions in the pathway amino-sugar metabolism; N-acetylmuramate degradation. Its function is as follows. Specifically catalyzes the cleavage of the D-lactyl ether substituent of MurNAc 6-phosphate, producing GlcNAc 6-phosphate and D-lactate. The sequence is that of N-acetylmuramic acid 6-phosphate etherase from Bacteroides fragilis (strain YCH46).